Reading from the N-terminus, the 1166-residue chain is Serine-aspartate repeat-containing protein E (1166 aa).

Residues 1–52 form the signal peptide; sequence MINRDNKKAITKKGMISNRLNKFSIRKYTVGTASILVGTTLIFGLGNQEAKA. A YSIRK-G/S signaling motif motif is present at residues 23 to 34; the sequence is FSIRKYTVGTAS. A ligand binding A region region spans residues 53–606; the sequence is AENTSTENAK…GDGTVKPEEK (554 aa). The interval 54–230 is disordered; sequence ENTSTENAKQ…SKEELKNNPE (177 aa). Positions 61–75 are enriched in basic and acidic residues; it reads AKQDDATTSDNKEVV. The span at 77-90 shows a compositional bias: low complexity; sequence ETENNSTTENNSTN. Basic and acidic residues predominate over residues 92-108; the sequence is IKKETNTDSQPEAKKES. The span at 118–129 shows a compositional bias: polar residues; that stretch reads NNVTATTETKPQ. The span at 130-145 shows a compositional bias: basic and acidic residues; sequence NIEKENVKPSTDKTAT. Low complexity predominate over residues 166-178; the sequence is TTKPSTSEPSTSE. Over residues 179-212 the composition is skewed to polar residues; it reads IQTKPTTPQESTNIENSQPQPTPSKVDNQVTDAT. Positions 221–230 are enriched in basic and acidic residues; the sequence is SKEELKNNPE. CNA-B domains are found at residues 607 to 719, 720 to 829, and 830 to 940; these read LYKI…YKEP, KYNL…YKTP, and KYSL…EEDT. A disordered region spans residues 904-1141; it reads VTNTTEDDKD…TGSENNGSNN (238 aa). Composition is skewed to acidic residues over residues 908-918 and 935-1105; these read TEDDKDADGGE and YFEE…DSDS. The LPXTG sorting signal signature appears at 1129 to 1133; it reads LPETG. A Pentaglycyl murein peptidoglycan amidated threonine modification is found at Thr-1132. Residues 1133 to 1166 constitute a propeptide, removed by sortase; the sequence is GSENNGSNNATLFGGLFAALGSLLLFGRRKKQNK.

This sequence belongs to the serine-aspartate repeat-containing protein (SDr) family. Interacts with host complement factor H/CFAH (via C-terminus). Interacts with host complement regulator C4BPA.

It localises to the secreted. It is found in the cell wall. Cell surface-associated calcium-binding protein which plays an important role in adhesion and pathogenesis. Contributes to the resistance to killing by innate immune components in blood and thus attenuates bacterial clearance by interacting with host complement factor H/CFAH and modulating its activity. Inhibits also bacterial opsonization and killing by interacting with host complement regulator C4BPA and thus inhibiting classical complement pathway activation. The chain is Serine-aspartate repeat-containing protein E (sdrE) from Staphylococcus aureus (strain Newman).